The chain runs to 237 residues: Proteasome subunit alpha (237 aa).

It belongs to the peptidase T1A family. As to quaternary structure, the 20S proteasome core is composed of 14 alpha and 14 beta subunits that assemble into four stacked heptameric rings, resulting in a barrel-shaped structure. The two inner rings, each composed of seven catalytic beta subunits, are sandwiched by two outer rings, each composed of seven alpha subunits. The catalytic chamber with the active sites is on the inside of the barrel. Has a gated structure, the ends of the cylinder being occluded by the N-termini of the alpha-subunits. Is capped by the proteasome-associated ATPase, ARC.

The protein resides in the cytoplasm. Its pathway is protein degradation; proteasomal Pup-dependent pathway. With respect to regulation, the formation of the proteasomal ATPase ARC-20S proteasome complex, likely via the docking of the C-termini of ARC into the intersubunit pockets in the alpha-rings, may trigger opening of the gate for substrate entry. Interconversion between the open-gate and close-gate conformations leads to a dynamic regulation of the 20S proteasome proteolysis activity. Component of the proteasome core, a large protease complex with broad specificity involved in protein degradation. This is Proteasome subunit alpha from Kineococcus radiotolerans (strain ATCC BAA-149 / DSM 14245 / SRS30216).